The sequence spans 189 residues: Chitin synthase 2 (189 aa).

The protein belongs to the chitin synthase family. Class II subfamily.

It is found in the cell membrane. It carries out the reaction [(1-&gt;4)-N-acetyl-beta-D-glucosaminyl](n) + UDP-N-acetyl-alpha-D-glucosamine = [(1-&gt;4)-N-acetyl-beta-D-glucosaminyl](n+1) + UDP + H(+). In terms of biological role, polymerizes chitin, a structural polymer of the cell wall and septum, by transferring the sugar moiety of UDP-GlcNAc to the non-reducing end of the growing chitin polymer. The polypeptide is Chitin synthase 2 (CHS2) (Exophiala exophialae (Black yeast-like fungus)).